The primary structure comprises 1052 residues: Membrane-bound transcription factor site-1 protease (1052 aa).

A signal peptide spans 1-17 (MKLINIWLLLLVVLLCG). Positions 18–186 (KKHLGDRLGK…TGRHSSRRLL (169 aa)) are excised as a propeptide. Asn-148 carries N-linked (GlcNAc...) asparagine glycosylation. Residue Ser-168 is modified to Phosphoserine. At 187-999 (RAIPRQVAQT…MPGRYNQEVG (813 aa)) the chain is on the lumenal side. Positions 190–472 (PRQVAQTLQA…HGKLDLLRAY (283 aa)) constitute a Peptidase S8 domain. Catalysis depends on Asp-218, which acts as the Charge relay system. An N-linked (GlcNAc...) asparagine glycan is attached at Asn-236. Catalysis depends on His-249, which acts as the Charge relay system. Asn-305 is a glycosylation site (N-linked (GlcNAc...) asparagine). Ser-414 serves as the catalytic Charge relay system. N-linked (GlcNAc...) asparagine glycosylation is found at Asn-515 and Asn-728. Positions 877–887 (PSLSHSGNRQR) are enriched in polar residues. The tract at residues 877–900 (PSLSHSGNRQRPPSGAGLAPPERM) is disordered. A glycan (N-linked (GlcNAc...) asparagine) is linked at Asn-939. A helical membrane pass occupies residues 1000-1022 (QTIPVFAFLGAMVALAFFVVQIS). Residues 1023 to 1052 (KAKSRPKRRRPRAKRPQLTQQTHPPRTPSV) are Cytoplasmic-facing. Basic residues predominate over residues 1025–1037 (KSRPKRRRPRAKR). Residues 1025-1052 (KSRPKRRRPRAKRPQLTQQTHPPRTPSV) form a disordered region.

This sequence belongs to the peptidase S8 family. Ca(2+) serves as cofactor. Post-translationally, the 148 kDa zymogen is processed progressively into two membrane-bound 120 and 106 kDa forms in the endoplasmic reticulum, and late into a secreted 98 kDa form. The propeptide is autocatalytically removed through an intramolecular cleavage after Leu-186. Further cleavage generates 14, 10, and 8 kDa intermediates.

The protein localises to the endoplasmic reticulum membrane. It localises to the golgi apparatus membrane. The catalysed reaction is Processes precursors containing basic and hydrophobic/aliphatic residues at P4 and P2, respectively, with a relatively relaxed acceptance of amino acids at P1 and P3.. Inhibited by divalent copper and zinc ions, but not by nickel or cobalt. Inhibited by its prosegment, but not smaller fragments. Inhibited by 4-(2-aminoethyl)benzenesulfonyl fluoride (AEBSF), a serine protease inhibitor. Its function is as follows. Serine protease that cleaves after hydrophobic or small residues, provided that Arg or Lys is in position P4: known substrates include SREBF1/SREBP1, SREBF2/SREBP2, BDNF, GNPTAB, ATF6, ATF6B and FAM20C. Cleaves substrates after Arg-Ser-Val-Leu (SREBP2), Arg-His-Leu-Leu (ATF6), Arg-Gly-Leu-Thr (BDNF) and its own propeptide after Arg-Arg-Leu-Leu. Catalyzes the first step in the proteolytic activation of the sterol regulatory element-binding proteins (SREBPs) SREBF1/SREBP1 and SREBF2/SREBP2. Also mediates the first step in the proteolytic activation of the cyclic AMP-dependent transcription factor ATF-6 (ATF6 and ATF6B). Mediates the protein cleavage of GNPTAB into subunit alpha and beta, thereby participating in biogenesis of lysosomes. Cleaves the propeptide from FAM20C which is required for FAM20C secretion from the Golgi apparatus membrane and for enhancement of FAM20C kinase activity, promoting osteoblast differentiation and biomineralization. Involved in the regulation of M6P-dependent Golgi-to-lysosome trafficking of lysosomal enzymes. It is required for the activation of CREB3L2/BBF2H7, a transcriptional activator of MIA3/TANGO and other genes controlling mega vesicle formation. Therefore, it plays a key role in the regulation of mega vesicle-mediated collagen trafficking. In astrocytes and osteoblasts, upon DNA damage and ER stress, mediates the first step of the regulated intramembrane proteolytic activation of the transcription factor CREB3L1, leading to the inhibition of cell-cycle progression. This is Membrane-bound transcription factor site-1 protease from Cricetulus griseus (Chinese hamster).